Consider the following 266-residue polypeptide: NAD-capped RNA hydrolase NudC (266 aa).

Arg74 provides a ligand contact to substrate. Residues Cys103, Cys106, Cys121, and Cys124 each coordinate Zn(2+). Residue Tyr129 participates in substrate binding. In terms of domain architecture, Nudix hydrolase spans 130–253 (PRVSPCIIVA…TIARVLIDET (124 aa)). Residues Ala163, Glu179, and Glu183 each coordinate a divalent metal cation. The Nudix box motif lies at 164-185 (GFVEAGETLEQCVAREVEEETG). 197-204 (QPWAFPSN) lines the substrate pocket. An a divalent metal cation-binding site is contributed by Glu224. Residue Ala246 coordinates substrate.

Belongs to the Nudix hydrolase family. NudC subfamily. In terms of assembly, homodimer. The cofactor is Mg(2+). It depends on Mn(2+) as a cofactor. Zn(2+) is required as a cofactor.

It catalyses the reaction a 5'-end NAD(+)-phospho-ribonucleoside in mRNA + H2O = a 5'-end phospho-adenosine-phospho-ribonucleoside in mRNA + beta-nicotinamide D-ribonucleotide + 2 H(+). The catalysed reaction is NAD(+) + H2O = beta-nicotinamide D-ribonucleotide + AMP + 2 H(+). The enzyme catalyses NADH + H2O = reduced beta-nicotinamide D-ribonucleotide + AMP + 2 H(+). In terms of biological role, mRNA decapping enzyme that specifically removes the nicotinamide adenine dinucleotide (NAD) cap from a subset of mRNAs by hydrolyzing the diphosphate linkage to produce nicotinamide mononucleotide (NMN) and 5' monophosphate mRNA. The NAD-cap is present at the 5'-end of some mRNAs and stabilizes RNA against 5'-processing. Has preference for mRNAs with a 5'-end purine. Catalyzes the hydrolysis of a broad range of dinucleotide pyrophosphates. This chain is NAD-capped RNA hydrolase NudC, found in Photobacterium profundum (strain SS9).